The sequence spans 481 residues: Surface lipoprotein assembly modifier 1 (481 aa).

Positions 1–23 (MSIQTKFILFLSSSLFLTPYSVA) are cleaved as a signal peptide. Positions 25–192 (EKSPQPHDGR…QYLSALNQRD (168 aa)) are N-terminal domain. A C-terminal probable beta barrel region spans residues 193 to 481 (QWKIQGGFSF…RIYVEISKTF (289 aa)). The next 14 beta stranded transmembrane spans lie at 194-204 (WKIQGGFSFLN), 233-243 (SYFGNAEKKWS), 248-258 (HFTKLSLEGSG), 271-281 (NARAGVGLGYQ), 285-295 (FELSLMPFTEK), 315-325 (SGARLDLSNWL), 329-338 (WQISTALEYG), 353-363 (YLASATLLYLA), 368-377 (YWFGGADYNR), 390-400 (KNVRLGWGQEW), 405-414 (STRLILNYAR), 432-441 (YASVLTIWHR), 448-458 (ITPKLSWSYQK), and 471-481 (NRIYVEISKTF).

This sequence belongs to the Slam family.

Its subcellular location is the cell outer membrane. Required for correct export to the cell surface of some cell outer membrane lipoproteins. In Haemophilus influenzae (strain ATCC 51907 / DSM 11121 / KW20 / Rd), this protein is Surface lipoprotein assembly modifier 1.